Here is a 695-residue protein sequence, read N- to C-terminus: Elongation factor G 1 (695 aa).

In terms of domain architecture, tr-type G spans 5–280 (ARYRNIGIFA…AVVDYLPSPT (276 aa)). GTP-binding positions include 14 to 21 (AHVDAGKT), 78 to 82 (DTPGH), and 132 to 135 (NKLD).

This sequence belongs to the TRAFAC class translation factor GTPase superfamily. Classic translation factor GTPase family. EF-G/EF-2 subfamily.

Its subcellular location is the cytoplasm. Its function is as follows. Catalyzes the GTP-dependent ribosomal translocation step during translation elongation. During this step, the ribosome changes from the pre-translocational (PRE) to the post-translocational (POST) state as the newly formed A-site-bound peptidyl-tRNA and P-site-bound deacylated tRNA move to the P and E sites, respectively. Catalyzes the coordinated movement of the two tRNA molecules, the mRNA and conformational changes in the ribosome. The polypeptide is Elongation factor G 1 (Pseudoalteromonas atlantica (strain T6c / ATCC BAA-1087)).